We begin with the raw amino-acid sequence, 386 residues long: Succinate--CoA ligase [ADP-forming] subunit beta (386 aa).

Residues 9 to 244 (KAVLRSYGVS…LDEEDSKEIE (236 aa)) form the ATP-grasp domain. ATP contacts are provided by residues K46, 53–55 (GRG), E99, C102, and E107. Mg(2+) contacts are provided by N199 and D213. Substrate is bound by residues N264 and 321–323 (GIM).

The protein belongs to the succinate/malate CoA ligase beta subunit family. Heterotetramer of two alpha and two beta subunits. It depends on Mg(2+) as a cofactor.

The enzyme catalyses succinate + ATP + CoA = succinyl-CoA + ADP + phosphate. It carries out the reaction GTP + succinate + CoA = succinyl-CoA + GDP + phosphate. It participates in carbohydrate metabolism; tricarboxylic acid cycle; succinate from succinyl-CoA (ligase route): step 1/1. Functionally, succinyl-CoA synthetase functions in the citric acid cycle (TCA), coupling the hydrolysis of succinyl-CoA to the synthesis of either ATP or GTP and thus represents the only step of substrate-level phosphorylation in the TCA. The beta subunit provides nucleotide specificity of the enzyme and binds the substrate succinate, while the binding sites for coenzyme A and phosphate are found in the alpha subunit. This is Succinate--CoA ligase [ADP-forming] subunit beta from Bacillus cereus (strain G9842).